The chain runs to 137 residues: Large ribosomal subunit protein bL12 (137 aa).

Belongs to the bacterial ribosomal protein bL12 family. As to quaternary structure, homodimer. Part of the ribosomal stalk of the 50S ribosomal subunit. Forms a multimeric L10(L12)X complex, where L10 forms an elongated spine to which 2 to 4 L12 dimers bind in a sequential fashion. Binds GTP-bound translation factors.

Forms part of the ribosomal stalk which helps the ribosome interact with GTP-bound translation factors. Is thus essential for accurate translation. This Synechococcus sp. (strain JA-3-3Ab) (Cyanobacteria bacterium Yellowstone A-Prime) protein is Large ribosomal subunit protein bL12.